The chain runs to 154 residues: 3-hydroxyacyl-[acyl-carrier-protein] dehydratase FabZ (154 aa).

H54 is a catalytic residue.

Belongs to the thioester dehydratase family. FabZ subfamily.

It localises to the cytoplasm. It catalyses the reaction a (3R)-hydroxyacyl-[ACP] = a (2E)-enoyl-[ACP] + H2O. In terms of biological role, involved in unsaturated fatty acids biosynthesis. Catalyzes the dehydration of short chain beta-hydroxyacyl-ACPs and long chain saturated and unsaturated beta-hydroxyacyl-ACPs. The protein is 3-hydroxyacyl-[acyl-carrier-protein] dehydratase FabZ of Shewanella oneidensis (strain ATCC 700550 / JCM 31522 / CIP 106686 / LMG 19005 / NCIMB 14063 / MR-1).